A 393-amino-acid polypeptide reads, in one-letter code: Adaptive-response sensory kinase SasA (393 aa).

A Histidine kinase domain is found at 171 to 393; sequence MLAHDLRSPL…CFHFTLPVFR (223 aa). H174 is subject to Phosphohistidine; by autocatalysis.

Homooligomerizes. Interacts with KaiC. Participates in the KaiABC clock complex, whose core is composed of a KaiC homohexamer, 6 KaiB and up to 6 KaiA dimers. SasA and KaiB(fs) compete to bind to KaiC.

The enzyme catalyses ATP + protein L-histidine = ADP + protein N-phospho-L-histidine.. Functionally, member of the two-component regulatory system SasA/RpaA involved in genome-wide circadian gene expression. One of several clock output pathways. Participates in the Kai clock protein complex, the main circadian regulator in cyanobacteria, via its interaction with KaiC. KaiC enhances the autophosphorylation activity of SasA, which then transfers its phosphate group to RpaA to activate it. In addition to its output function, recruits fold-shifted KaiB (KaiB(fs)) to KaiC to cooperatively form the KaiB(6):KaiC(6) complex (independent of SasA kinase activity). Required for robustness of the circadian rhythm of gene expression and is involved in clock output, also required for adaptation to light/dark cycles. In Gloeothece citriformis (strain PCC 7424) (Cyanothece sp. (strain PCC 7424)), this protein is Adaptive-response sensory kinase SasA.